Consider the following 122-residue polypeptide: Small ribosomal subunit protein uS13 (122 aa).

Positions 97–122 (PVRGQKTKSNARTRKGPRPSRIKKKK) are disordered. Basic residues predominate over residues 101–122 (QKTKSNARTRKGPRPSRIKKKK).

This sequence belongs to the universal ribosomal protein uS13 family. In terms of assembly, part of the 30S ribosomal subunit. Forms a loose heterodimer with protein S19. Forms two bridges to the 50S subunit in the 70S ribosome.

Functionally, located at the top of the head of the 30S subunit, it contacts several helices of the 16S rRNA. In the 70S ribosome it contacts the 23S rRNA (bridge B1a) and protein L5 of the 50S subunit (bridge B1b), connecting the 2 subunits; these bridges are implicated in subunit movement. Contacts the tRNAs in the A and P-sites. The protein is Small ribosomal subunit protein uS13 of Thermosipho melanesiensis (strain DSM 12029 / CIP 104789 / BI429).